Reading from the N-terminus, the 842-residue chain is Cation/H(+) antiporter 20 (842 aa).

Transmembrane regions (helical) follow at residues 26-46, 55-75, 86-106, 122-142, 155-175, 193-213, 228-248, 283-303, 320-340, 353-373, 380-400, and 413-433; these read FPLL…LAVL, VIAE…RNMA, MPIL…LVGL, GIAV…AFVI, YAEF…PVLA, MAAA…AVAL, LVSL…LVVI, FATD…GLTI, FVSG…TDVA, LVVV…AVMV, ALTL…VLNI, and AILV…VMAI. The span at 585–595 shows a compositional bias: basic and acidic residues; that stretch reads DHGHSHHHQDG. The interval 585–605 is disordered; that stretch reads DHGHSHHHQDGGGDGNVPENV.

It belongs to the monovalent cation:proton antiporter 2 (CPA2) transporter (TC 2.A.37) family. CHX (TC 2.A.37.4) subfamily. Expressed in leaves and stems. Preferentially expressed in guards cells.

It localises to the endomembrane system. Operates as a K(+)/H(+) antiporter that maintains K(+) homeostasis in guard cells and could regulate pH. Plays a critical role in osmoregulation through the control of stomates opening. The sequence is that of Cation/H(+) antiporter 20 (CHX20) from Arabidopsis thaliana (Mouse-ear cress).